The primary structure comprises 121 residues: Small ribosomal subunit protein uS11 (121 aa).

This sequence belongs to the universal ribosomal protein uS11 family. In terms of assembly, part of the 30S ribosomal subunit. Interacts with proteins S7 and S18. Binds to IF-3.

Its function is as follows. Located on the platform of the 30S subunit, it bridges several disparate RNA helices of the 16S rRNA. Forms part of the Shine-Dalgarno cleft in the 70S ribosome. The polypeptide is Small ribosomal subunit protein uS11 (Mycoplasma pneumoniae (strain ATCC 29342 / M129 / Subtype 1) (Mycoplasmoides pneumoniae)).